A 223-amino-acid polypeptide reads, in one-letter code: MSLYATQDEKKQAAAKAALKHLPKGGILGVGTGSTVNFLIDLLPELQLEAAVASSQATADRLKKLGIEVVDMNHVVSLDAYVDGADEIDRHMHMIKGGGAALTREKIVASIAKKFVCIVDDSKWVDQLGRDFPLPVEVIPMARSAVARKLVSLGGDPVYREGVVTDNGNVILDVFNLNILNAIDLEKTINNIPGVVTNGIFALNPATIAIVATNDGIEERTAQ.

Substrate-binding positions include 32–35, 83–86, and 96–99; these read TGST, DGAD, and KGGG. E105 (proton acceptor) is an active-site residue. K123 is a binding site for substrate.

It belongs to the ribose 5-phosphate isomerase family. Homodimer.

The enzyme catalyses aldehydo-D-ribose 5-phosphate = D-ribulose 5-phosphate. The protein operates within carbohydrate degradation; pentose phosphate pathway; D-ribose 5-phosphate from D-ribulose 5-phosphate (non-oxidative stage): step 1/1. Functionally, catalyzes the reversible conversion of ribose-5-phosphate to ribulose 5-phosphate. The protein is Ribose-5-phosphate isomerase A of Acinetobacter baumannii (strain SDF).